A 405-amino-acid polypeptide reads, in one-letter code: Squamosa promoter-binding-like protein 6 (405 aa).

An SBP-type zinc finger spans residues 121–198 (NPLCQVYGCS…AGHNERRRKP (78 aa)). The Zn(2+) site is built by Cys-124, Cys-129, Cys-146, His-149, Cys-165, Cys-168, His-172, and Cys-184. The Bipartite nuclear localization signal motif lies at 181-197 (KRSCRRRLAGHNERRRK).

Requires Zn(2+) as cofactor.

It is found in the nucleus. In terms of biological role, trans-acting factor that binds specifically to the consensus nucleotide sequence 5'-TNCGTACAA-3'. The polypeptide is Squamosa promoter-binding-like protein 6 (SPL6) (Arabidopsis thaliana (Mouse-ear cress)).